Consider the following 433-residue polypeptide: Legumain (433 aa).

The signal sequence occupies residues 1 to 17; sequence MIWEFTVLLSLVLGTGA. The propeptide occupies 18 to 25; it reads VPLEDPED. N-linked (GlcNAc...) asparagine glycosylation is present at Asn-91. His-148 is a catalytic residue. The N-linked (GlcNAc...) asparagine glycan is linked to Asn-167. The Nucleophile role is filled by Cys-189. Residues Asn-263 and Asn-272 are each glycosylated (N-linked (GlcNAc...) asparagine). The propeptide occupies 324-433; sequence DLQESRRLVQ…SMNKVCHGYY (110 aa). 2 cysteine pairs are disulfide-bonded: Cys-378–Cys-412 and Cys-390–Cys-429.

This sequence belongs to the peptidase C13 family. As to quaternary structure, homodimer before autocatalytic removal of the propeptide. Monomer after autocatalytic processing. May interact with integrins. Post-translationally, activated by autocatalytic processing at pH 4. In terms of tissue distribution, detected in kidney (at protein level).

It localises to the lysosome. It catalyses the reaction Hydrolysis of proteins and small molecule substrates at -Asn-|-Xaa- bonds.. In terms of biological role, has a strict specificity for hydrolysis of asparaginyl bonds. Can also cleave aspartyl bonds slowly, especially under acidic conditions. Involved in the processing of proteins for MHC class II antigen presentation in the lysosomal/endosomal system. Also involved in MHC class I antigen presentation in cross-presenting dendritic cells by mediating cleavage and maturation of Perforin-2 (MPEG1), thereby promoting antigen translocation in the cytosol. Required for normal lysosomal protein degradation in renal proximal tubules. Required for normal degradation of internalized EGFR. Plays a role in the regulation of cell proliferation via its role in EGFR degradation. The sequence is that of Legumain (LGMN) from Bos taurus (Bovine).